A 487-amino-acid chain; its full sequence is MSIRFPEIPGTTRAPGTSLSSRGIFPTSPGVPQIPTTPNSYSALLHPHKSEAKGKHPLSFSSSMTKRLTPQEKKARRPTSRACVFCHSKHLQCSHSRPCQNCIKRNLAHECRDVVRKRAKYMSTTEVPAVSGESSSESGRATGENGSEMGNPPDPQIAYLDGVFERSSIHESLQDSPMSTPASNFNSNFLNQEYMMLGDLISKPSSPSLDVPMMYAENPSRPFISLGQSDERPKSPEFNNFDFSSLDKAQYVSPLVSHHIYQNVQDIYANKVIDFDYPSSYHSLTSFLRQRFSFTGKSLSDSEKAKKRENLLMILRLIASYRPTFISTHKALFRPFDFQFLEMSFQRCLLDYENLSRLNASPTIIWRRTGEIVSMSNDLVALLGLNISTILSKRTFILELMYDDESIVEYFRLFESVAVGNLHSTIVTRCKLIKRPSEGIETNTSMDSDYIEFCSVWTVKRDLFDLPMMVVGQFLPVLPTPDGFRTY.

The segment at 1-75 (MSIRFPEIPG…KRLTPQEKKA (75 aa)) is disordered. Residues 59 to 68 (SFSSSMTKRL) are compositionally biased toward polar residues. Residues 83–111 (CVFCHSKHLQCSHSRPCQNCIKRNLAHEC) constitute a DNA-binding region (zn(2)-C6 fungal-type). Polar residues predominate over residues 122-139 (MSTTEVPAVSGESSSESG). A disordered region spans residues 122–158 (MSTTEVPAVSGESSSESGRATGENGSEMGNPPDPQIA). The 73-residue stretch at 348-420 (CLLDYENLSR…FRLFESVAVG (73 aa)) folds into the PAS domain.

The protein belongs to the ERT1/acuK family.

It is found in the nucleus. Transcription factor which regulates nonfermentable carbon utilization. The protein is Glucose starvation modulator protein 1 (GSM1) of Clavispora lusitaniae (strain ATCC 42720) (Yeast).